The sequence spans 550 residues: Iduronate 2-sulfatase (550 aa).

An N-terminal signal peptide occupies residues 1–25; that stretch reads MPPPRTGRGLLWLGLVLSSVCVALG. A propeptide spanning residues 26–33 is cleaved from the precursor; it reads SETQANST. Residues Asp45, Asp46, and Cys84 each contribute to the Ca(2+) site. Cys84 acts as the Nucleophile in catalysis. Cys84 carries the 3-oxoalanine (Cys) modification. A glycan (N-linked (GlcNAc...) asparagine) is linked at Asn115. Residue His138 is part of the active site. Residue Asn144 is glycosylated (N-linked (GlcNAc...) asparagine). Cysteines 171 and 184 form a disulfide. Residues Asn246, Asn280, and Asn325 are each glycosylated (N-linked (GlcNAc...) asparagine). Ca(2+)-binding residues include Asp334 and His335. Cys422 and Cys432 are oxidised to a cystine. Residues Asn513 and Asn537 are each glycosylated (N-linked (GlcNAc...) asparagine).

Belongs to the sulfatase family. In terms of assembly, monomer. The 58-kDa mature form is composed of two chains resulting from proteolitic processing, the 42-kDa chain and the 14-kDa chain that remain stably associated and form the 58-kDa intermediate form which is enzymatically active. Requires Ca(2+) as cofactor. In terms of processing, synthesized as a 75-kDa precursor form in the endoplasmic reticulum (ER), and then processed by proteolytic cleavage through various intermediates to yield a 55-kDa mature form, with the release of an 18 kDa polypeptide. Post-translationally, the conversion to 3-oxoalanine (also known as C-formylglycine, FGly), of a serine or cysteine residue in prokaryotes and of a cysteine residue in eukaryotes, is critical for catalytic activity. In terms of tissue distribution, liver, kidney, lung, and placenta.

It is found in the lysosome. The enzyme catalyses Hydrolysis of the 2-sulfate groups of the L-iduronate 2-sulfate units of dermatan sulfate, heparan sulfate and heparin.. Its function is as follows. Lysosomal enzyme involved in the degradation pathway of dermatan sulfate and heparan sulfate. This is Iduronate 2-sulfatase (IDS) from Homo sapiens (Human).